Consider the following 230-residue polypeptide: LexA repressor (230 aa).

A DNA-binding region (H-T-H motif) is located at residues 28-48 (IREIGEALDIRSTNGVNDHLK). Residues serine 148 and lysine 185 each act as for autocatalytic cleavage activity in the active site.

This sequence belongs to the peptidase S24 family. In terms of assembly, homodimer.

The enzyme catalyses Hydrolysis of Ala-|-Gly bond in repressor LexA.. Functionally, represses a number of genes involved in the response to DNA damage (SOS response), including recA and lexA. In the presence of single-stranded DNA, RecA interacts with LexA causing an autocatalytic cleavage which disrupts the DNA-binding part of LexA, leading to derepression of the SOS regulon and eventually DNA repair. The chain is LexA repressor from Anaeromyxobacter sp. (strain K).